The chain runs to 137 residues: MPNFAGTWKMKSSENFDELLKALGVNAMLRKLAVTAASKPHVEIQQNGEQFYIRTYTTIRTTEINFHIGEEFNEETVDGRKCKSLATWETENKMYCKQTLLSGNGPKTFWTRELRGDELILTFGADDVVCTRIYMRA.

The Nuclear localization signal motif lies at 21 to 31 (KALGVNAMLRK). Residue 132-134 (RIY) participates in all-trans-retinoate binding.

It belongs to the calycin superfamily. Fatty-acid binding protein (FABP) family.

The protein resides in the cytoplasm. Cytosolic CRABPs may regulate the access of retinoic acid to the nuclear retinoic acid receptors. The chain is Cellular retinoic acid-binding protein 1 (crabp1) from Hippocampus comes (Tiger tail seahorse).